A 332-amino-acid chain; its full sequence is Fructose-1,6-bisphosphatase class 1 (332 aa).

Residues E92, D113, L115, and D116 each coordinate Mg(2+). Substrate is bound by residues 116–119, N209, Y242, and K272; that span reads DGSS. E278 contributes to the Mg(2+) binding site.

It belongs to the FBPase class 1 family. In terms of assembly, homotetramer. Mg(2+) serves as cofactor.

Its subcellular location is the cytoplasm. The catalysed reaction is beta-D-fructose 1,6-bisphosphate + H2O = beta-D-fructose 6-phosphate + phosphate. Its pathway is carbohydrate biosynthesis; Calvin cycle. The sequence is that of Fructose-1,6-bisphosphatase class 1 from Prosthecochloris aestuarii (strain DSM 271 / SK 413).